A 424-amino-acid chain; its full sequence is Riboflavin biosynthesis protein RibBA (424 aa).

A DHBP synthase region spans residues 1–204 (MTRFDSIERA…IADLIAWRRK (204 aa)). Residues 28 to 29 (RE), Asp-33, 141 to 145 (RPGHT), and Glu-165 each bind D-ribulose 5-phosphate. Residue Glu-29 coordinates Mg(2+). His-144 is a binding site for Mg(2+). Residues 205–424 (HEKHVLRIAE…QNTAQPGTAL (220 aa)) are GTP cyclohydrolase II. 259 to 263 (RVHSE) is a binding site for GTP. Cys-264, Cys-275, and Cys-277 together coordinate Zn(2+). Residues Gln-280, 303–305 (EGR), and Thr-325 each bind GTP. The active-site Proton acceptor; for GTP cyclohydrolase activity is Asp-337. Arg-339 functions as the Nucleophile; for GTP cyclohydrolase activity in the catalytic mechanism. GTP-binding residues include Thr-360 and Lys-365.

In the N-terminal section; belongs to the DHBP synthase family. This sequence in the C-terminal section; belongs to the GTP cyclohydrolase II family. Mg(2+) is required as a cofactor. Mn(2+) serves as cofactor. The cofactor is Zn(2+).

The enzyme catalyses D-ribulose 5-phosphate = (2S)-2-hydroxy-3-oxobutyl phosphate + formate + H(+). The catalysed reaction is GTP + 4 H2O = 2,5-diamino-6-hydroxy-4-(5-phosphoribosylamino)-pyrimidine + formate + 2 phosphate + 3 H(+). Its pathway is cofactor biosynthesis; riboflavin biosynthesis; 2-hydroxy-3-oxobutyl phosphate from D-ribulose 5-phosphate: step 1/1. It participates in cofactor biosynthesis; riboflavin biosynthesis; 5-amino-6-(D-ribitylamino)uracil from GTP: step 1/4. Its function is as follows. Catalyzes the conversion of D-ribulose 5-phosphate to formate and 3,4-dihydroxy-2-butanone 4-phosphate. Catalyzes the conversion of GTP to 2,5-diamino-6-ribosylamino-4(3H)-pyrimidinone 5'-phosphate (DARP), formate and pyrophosphate. The polypeptide is Riboflavin biosynthesis protein RibBA (Rhodococcus erythropolis (strain PR4 / NBRC 100887)).